The following is a 27-amino-acid chain: Chitinase 47 kDa (27 aa).

Residues 3 to 27 enclose the GH18 domain; the sequence is SKVVGYFTEWGTYDRKYYVKNIEXS.

The protein belongs to the glycosyl hydrolase 18 family. Chitinase class II subfamily. As to quaternary structure, homodimer.

The catalysed reaction is Random endo-hydrolysis of N-acetyl-beta-D-glucosaminide (1-&gt;4)-beta-linkages in chitin and chitodextrins.. Functionally, able to cleave chitin oligomers from N=3 to 6. The sequence is that of Chitinase 47 kDa from Streptomyces olivaceoviridis (Streptomyces corchorusii).